The following is a 778-amino-acid chain: Endonuclease MutS2 (778 aa).

328–335 (GPNTGGKT) lines the ATP pocket. Positions 702–777 (LDLRGKRYEE…GSGATIVTFK (76 aa)) constitute a Smr domain.

Belongs to the DNA mismatch repair MutS family. MutS2 subfamily. As to quaternary structure, homodimer. Binds to stalled ribosomes, contacting rRNA.

Endonuclease that is involved in the suppression of homologous recombination and thus may have a key role in the control of bacterial genetic diversity. Its function is as follows. Acts as a ribosome collision sensor, splitting the ribosome into its 2 subunits. Detects stalled/collided 70S ribosomes which it binds and splits by an ATP-hydrolysis driven conformational change. Acts upstream of the ribosome quality control system (RQC), a ribosome-associated complex that mediates the extraction of incompletely synthesized nascent chains from stalled ribosomes and their subsequent degradation. Probably generates substrates for RQC. This Streptococcus pneumoniae serotype 19F (strain G54) protein is Endonuclease MutS2.